A 75-amino-acid chain; its full sequence is Tautomerase PptA (75 aa).

Pro2 functions as the Proton acceptor; via imino nitrogen in the catalytic mechanism.

Belongs to the 4-oxalocrotonate tautomerase family. PptA subfamily. As to quaternary structure, homodimer.

The protein localises to the cytoplasm. In Klebsiella pneumoniae subsp. pneumoniae (strain ATCC 700721 / MGH 78578), this protein is Tautomerase PptA.